Reading from the N-terminus, the 61-residue chain is Metallothionein-2D (61 aa).

Position 1 is an N-acetylmethionine (M1). The tract at residues 1–29 (MDPNCSCATRDSCACASSCKCKECKCTSC) is beta. C5, C7, C13, C15, C19, C21, C24, C26, C29, C33, C34, C36, C37, C41, C44, C48, C50, C57, C59, and C60 together coordinate a divalent metal cation. Residues 30–61 (KKSCCSCCPAGCTKCAQGCICKGASDKCSCCA) form an alpha region.

This sequence belongs to the metallothionein superfamily. Type 1 family. As to quaternary structure, monomer.

Its function is as follows. Metallothioneins have a high content of cysteine residues that bind various heavy metals; these proteins are transcriptionally regulated by both heavy metals and glucocorticoids. In Oryctolagus cuniculus (Rabbit), this protein is Metallothionein-2D.